Reading from the N-terminus, the 417-residue chain is Actin-related protein 10 (417 aa).

The protein belongs to the actin family. In terms of assembly, subunit of dynactin, a multiprotein complex part of a tripartite complex with dynein and a adapter, such as BICDL1, BICD2 or HOOK3. The dynactin complex is built around ACTR1A/ACTB filament and consists of an actin-related filament composed of a shoulder domain, a pointed end and a barbed end. Its length is defined by its flexible shoulder domain. The soulder is composed of 2 DCTN1 subunits, 4 DCTN2 and 2 DCTN3. The 4 DCNT2 (via N-terminus) bind the ACTR1A filament and act as molecular rulers to determine the length. The pointed end is important for binding dynein-dynactin cargo adapters. Consists of 4 subunits: ACTR10, DCNT4, DCTN5 and DCTN6. The barbed end is composed of a CAPZA1:CAPZB heterodimers, which binds ACTR1A/ACTB filament and dynactin and stabilizes dynactin.

Its subcellular location is the cytoplasm. It localises to the cytoskeleton. In terms of biological role, part of the dynactin complex that activates the molecular motor dynein for ultra-processive transport along microtubules. The sequence is that of Actin-related protein 10 (ACTR10) from Sus scrofa (Pig).